Here is a 349-residue protein sequence, read N- to C-terminus: Ribosomal RNA small subunit methyltransferase H 1 (349 aa).

Residues 79–81 (GGH), Asp-99, Phe-129, Asp-148, and Gln-155 contribute to the S-adenosyl-L-methionine site.

Belongs to the methyltransferase superfamily. RsmH family.

It is found in the cytoplasm. It catalyses the reaction cytidine(1402) in 16S rRNA + S-adenosyl-L-methionine = N(4)-methylcytidine(1402) in 16S rRNA + S-adenosyl-L-homocysteine + H(+). Its function is as follows. Specifically methylates the N4 position of cytidine in position 1402 (C1402) of 16S rRNA. The sequence is that of Ribosomal RNA small subunit methyltransferase H 1 from Agathobacter rectalis (strain ATCC 33656 / DSM 3377 / JCM 17463 / KCTC 5835 / VPI 0990) (Eubacterium rectale).